The chain runs to 382 residues: Gibberellin 2-beta-dioxygenase 1 (382 aa).

The Fe2OG dioxygenase domain maps to 189–321 (DSDCLLRINH…RLSTIYFASP (133 aa)). Tyr199 contributes to the 2-oxoglutarate binding site. The Fe cation site is built by His241, Asp243, and His302. Residues Arg312 and Ser314 each coordinate 2-oxoglutarate.

Belongs to the iron/ascorbate-dependent oxidoreductase family. GA2OX subfamily. Requires L-ascorbate as cofactor. Fe(2+) is required as a cofactor. In terms of tissue distribution, expressed in roots, shoot apex, and in the basal region of leaf primordia and young leaves.

It carries out the reaction gibberellin A1 + 2-oxoglutarate + O2 = gibberellin A8 + succinate + CO2. In terms of biological role, catalyzes the 2-beta-hydroxylation of several biologically active gibberellins, leading to the homeostatic regulation of their endogenous level. Catabolism of gibberellins (GAs) plays a central role in plant development. Controls the level of bioactive GAs in the shoot apical meristem, which regulates the vegetative to reproductive phase transition. In vitro, converts GA1, GA4, GA9, GA20, and GA44 to the corresponding 2-beta-hydroxylated products GA8, GA34, GA51, GA29, and GA98, respectively. The protein is Gibberellin 2-beta-dioxygenase 1 of Oryza sativa subsp. japonica (Rice).